The primary structure comprises 264 residues: Thymidylate synthase (264 aa).

Position 21 (Arg-21) interacts with dUMP. A (6R)-5,10-methylene-5,6,7,8-tetrahydrofolate-binding site is contributed by His-51. 126–127 (RR) contacts dUMP. Cys-146 acts as the Nucleophile in catalysis. DUMP is bound by residues 166 to 169 (RSAD), Asn-177, and 207 to 209 (HLY). (6R)-5,10-methylene-5,6,7,8-tetrahydrofolate is bound at residue Asp-169. Ala-263 is a binding site for (6R)-5,10-methylene-5,6,7,8-tetrahydrofolate.

It belongs to the thymidylate synthase family. Bacterial-type ThyA subfamily. In terms of assembly, homodimer.

The protein resides in the cytoplasm. It catalyses the reaction dUMP + (6R)-5,10-methylene-5,6,7,8-tetrahydrofolate = 7,8-dihydrofolate + dTMP. Its pathway is pyrimidine metabolism; dTTP biosynthesis. In terms of biological role, catalyzes the reductive methylation of 2'-deoxyuridine-5'-monophosphate (dUMP) to 2'-deoxythymidine-5'-monophosphate (dTMP) while utilizing 5,10-methylenetetrahydrofolate (mTHF) as the methyl donor and reductant in the reaction, yielding dihydrofolate (DHF) as a by-product. This enzymatic reaction provides an intracellular de novo source of dTMP, an essential precursor for DNA biosynthesis. The protein is Thymidylate synthase of Polynucleobacter asymbioticus (strain DSM 18221 / CIP 109841 / QLW-P1DMWA-1) (Polynucleobacter necessarius subsp. asymbioticus).